The chain runs to 455 residues: Bifunctional protein GlmU (455 aa).

A pyrophosphorylase region spans residues 1–225 (MNIVILAAGM…EWETLGVNSK (225 aa)). UDP-N-acetyl-alpha-D-glucosamine is bound by residues 6-9 (LAAG), K20, Q71, 76-77 (GT), 98-100 (YGD), G135, E150, N165, and N223. Residue D100 participates in Mg(2+) binding. A Mg(2+)-binding site is contributed by N223. A linker region spans residues 226 to 246 (VQLAELERIHQRNLAQQLLED). Residues 247-455 (GVTLIDPARI…QRPVKQKKEG (209 aa)) are N-acetyltransferase. UDP-N-acetyl-alpha-D-glucosamine is bound by residues R329 and K347. The active-site Proton acceptor is the H359. Positions 362 and 373 each coordinate UDP-N-acetyl-alpha-D-glucosamine. Acetyl-CoA contacts are provided by residues A376, 382-383 (NY), S401, A419, and R436.

This sequence in the N-terminal section; belongs to the N-acetylglucosamine-1-phosphate uridyltransferase family. It in the C-terminal section; belongs to the transferase hexapeptide repeat family. In terms of assembly, homotrimer. Mg(2+) serves as cofactor.

The protein localises to the cytoplasm. It carries out the reaction alpha-D-glucosamine 1-phosphate + acetyl-CoA = N-acetyl-alpha-D-glucosamine 1-phosphate + CoA + H(+). The catalysed reaction is N-acetyl-alpha-D-glucosamine 1-phosphate + UTP + H(+) = UDP-N-acetyl-alpha-D-glucosamine + diphosphate. It functions in the pathway nucleotide-sugar biosynthesis; UDP-N-acetyl-alpha-D-glucosamine biosynthesis; N-acetyl-alpha-D-glucosamine 1-phosphate from alpha-D-glucosamine 6-phosphate (route II): step 2/2. It participates in nucleotide-sugar biosynthesis; UDP-N-acetyl-alpha-D-glucosamine biosynthesis; UDP-N-acetyl-alpha-D-glucosamine from N-acetyl-alpha-D-glucosamine 1-phosphate: step 1/1. The protein operates within bacterial outer membrane biogenesis; LPS lipid A biosynthesis. Functionally, catalyzes the last two sequential reactions in the de novo biosynthetic pathway for UDP-N-acetylglucosamine (UDP-GlcNAc). The C-terminal domain catalyzes the transfer of acetyl group from acetyl coenzyme A to glucosamine-1-phosphate (GlcN-1-P) to produce N-acetylglucosamine-1-phosphate (GlcNAc-1-P), which is converted into UDP-GlcNAc by the transfer of uridine 5-monophosphate (from uridine 5-triphosphate), a reaction catalyzed by the N-terminal domain. The protein is Bifunctional protein GlmU of Ralstonia pickettii (strain 12J).